Reading from the N-terminus, the 1191-residue chain is Putative glycoside hydrolase 22789 (1191 aa).

Low complexity predominate over residues proline 173–alanine 187. The disordered stretch occupies residues proline 173–lysine 221.

Belongs to the glycoside hydrolase-like 3 (GHL3) family.

The sequence is that of Putative glycoside hydrolase 22789 from Monosiga brevicollis (Choanoflagellate).